Reading from the N-terminus, the 105-residue chain is Large ribosomal subunit protein uL24 (105 aa).

This sequence belongs to the universal ribosomal protein uL24 family. Part of the 50S ribosomal subunit.

In terms of biological role, one of two assembly initiator proteins, it binds directly to the 5'-end of the 23S rRNA, where it nucleates assembly of the 50S subunit. Functionally, one of the proteins that surrounds the polypeptide exit tunnel on the outside of the subunit. The protein is Large ribosomal subunit protein uL24 of Psychrobacter arcticus (strain DSM 17307 / VKM B-2377 / 273-4).